The chain runs to 356 residues: Probable dual-specificity RNA methyltransferase RlmN (356 aa).

Glu92 (proton acceptor) is an active-site residue. The Radical SAM core domain occupies His98–Asp336. Cysteines 105 and 341 form a disulfide. Cys112, Cys116, and Cys119 together coordinate [4Fe-4S] cluster. S-adenosyl-L-methionine-binding positions include Gly164 to Glu165, Ser196, Ser219 to His221, and Asn297. Catalysis depends on Cys341, which acts as the S-methylcysteine intermediate.

Belongs to the radical SAM superfamily. RlmN family. [4Fe-4S] cluster is required as a cofactor.

It localises to the cytoplasm. The catalysed reaction is adenosine(2503) in 23S rRNA + 2 reduced [2Fe-2S]-[ferredoxin] + 2 S-adenosyl-L-methionine = 2-methyladenosine(2503) in 23S rRNA + 5'-deoxyadenosine + L-methionine + 2 oxidized [2Fe-2S]-[ferredoxin] + S-adenosyl-L-homocysteine. It carries out the reaction adenosine(37) in tRNA + 2 reduced [2Fe-2S]-[ferredoxin] + 2 S-adenosyl-L-methionine = 2-methyladenosine(37) in tRNA + 5'-deoxyadenosine + L-methionine + 2 oxidized [2Fe-2S]-[ferredoxin] + S-adenosyl-L-homocysteine. Its function is as follows. Specifically methylates position 2 of adenine 2503 in 23S rRNA and position 2 of adenine 37 in tRNAs. The polypeptide is Probable dual-specificity RNA methyltransferase RlmN (Shouchella clausii (strain KSM-K16) (Alkalihalobacillus clausii)).